Here is a 320-residue protein sequence, read N- to C-terminus: o-succinylbenzoate synthase (320 aa).

Catalysis depends on K133, which acts as the Proton donor. Residues D161, E190, and D213 each contribute to the Mg(2+) site. Catalysis depends on K235, which acts as the Proton acceptor.

The protein belongs to the mandelate racemase/muconate lactonizing enzyme family. MenC type 1 subfamily. A divalent metal cation serves as cofactor.

The catalysed reaction is (1R,6R)-6-hydroxy-2-succinyl-cyclohexa-2,4-diene-1-carboxylate = 2-succinylbenzoate + H2O. Its pathway is quinol/quinone metabolism; 1,4-dihydroxy-2-naphthoate biosynthesis; 1,4-dihydroxy-2-naphthoate from chorismate: step 4/7. It participates in quinol/quinone metabolism; menaquinone biosynthesis. In terms of biological role, converts 2-succinyl-6-hydroxy-2,4-cyclohexadiene-1-carboxylate (SHCHC) to 2-succinylbenzoate (OSB). This is o-succinylbenzoate synthase from Salmonella paratyphi C (strain RKS4594).